The primary structure comprises 417 residues: MFSFEKNSLKNTDKEIFDAIELEVKRQHEHVELIASENYASPAVMEAQGSQLTNKYAEGYHGKRYYGGCEFVDIAEKLAIERAQQLFGVDYANVQPHSGSQANAAVYNAVLKPGDTVLGMDLGAGGHLTHGSKVNFSGKIYNSIQYGLDENGDIDYEQVAQLAKEHKPKMIIAGFSAFSGIINWQKFREIADSVDAVLMADIAHVAGLVAAGVYPNPFPYVYVATTTTHKTLRGPRGGLILCNNNPELAKKFQSAIFPGIQGGPLMHVIAAKAVAFKEALEPSFVDYQKQVLKNAKAMEKVLKQRGINIISGGTSNHLLLLDITNTGFSGKEAEAALGRANITVNKNSIPNDPRSPFVTSGLRIGSPAITTRGFKEKECELVANLLADVVFNCGDEKVENETAAKVLDLCDKFPVYK.

(6S)-5,6,7,8-tetrahydrofolate is bound by residues Leu-122 and 126 to 128 (GHL). Lys-230 is subject to N6-(pyridoxal phosphate)lysine. Residue 355–357 (SPF) coordinates (6S)-5,6,7,8-tetrahydrofolate.

Belongs to the SHMT family. Homodimer. Requires pyridoxal 5'-phosphate as cofactor.

The protein resides in the cytoplasm. The enzyme catalyses (6R)-5,10-methylene-5,6,7,8-tetrahydrofolate + glycine + H2O = (6S)-5,6,7,8-tetrahydrofolate + L-serine. It functions in the pathway one-carbon metabolism; tetrahydrofolate interconversion. It participates in amino-acid biosynthesis; glycine biosynthesis; glycine from L-serine: step 1/1. Its function is as follows. Catalyzes the reversible interconversion of serine and glycine with tetrahydrofolate (THF) serving as the one-carbon carrier. This reaction serves as the major source of one-carbon groups required for the biosynthesis of purines, thymidylate, methionine, and other important biomolecules. Also exhibits THF-independent aldolase activity toward beta-hydroxyamino acids, producing glycine and aldehydes, via a retro-aldol mechanism. The protein is Serine hydroxymethyltransferase of Francisella tularensis subsp. mediasiatica (strain FSC147).